We begin with the raw amino-acid sequence, 372 residues long: MNTGIDLQGSFIESLKQLGLPDGVAKALWIPLPSFLMIIGATVGVLVVVWLERKISAAAQQRIGPEYAGPLGVLQPVADGIKLVFKEDIIPAKADPWLFTLGPVLVVLPVFVSYLIVPFGQNLVITDLNVGIFLWISLSSIAPIGLLMSGYASNNKYSLLGGLRAAAQSISYEIPLAFSVLAIAMMSNSLSTIDIVQQQSGYGILGWNVWRQPVGLIIFWIAALAECERLPFDLPEAEEEIVAGYQTEYSGMKFGLFYVGSYVNLVLSALVFAILYLGGWEFPVPLDKLAGWLGVNDNSPWLQVITASLGITMTVLKAYFLVFIAVLLRWTVPRVRIDQLLNLGWKFLLPVSLVNLLLTAALKLAFPVAFGG.

8 helical membrane-spanning segments follow: residues 29–49 (WIPLPSFLMIIGATVGVLVVV), 97–117 (WLFTLGPVLVVLPVFVSYLIV), 130–150 (VGIFLWISLSSIAPIGLLMSG), 176–196 (LAFSVLAIAMMSNSLSTIDIV), 204–224 (ILGWNVWRQPVGLIIFWIAAL), 254–274 (FGLFYVGSYVNLVLSALVFAI), 308–328 (SLGITMTVLKAYFLVFIAVLL), and 347–367 (FLLPVSLVNLLLTAALKLAFP).

This sequence belongs to the complex I subunit 1 family. As to quaternary structure, NDH-1 is composed of at least 11 different subunits.

It localises to the cellular thylakoid membrane. The catalysed reaction is a plastoquinone + NADH + (n+1) H(+)(in) = a plastoquinol + NAD(+) + n H(+)(out). The enzyme catalyses a plastoquinone + NADPH + (n+1) H(+)(in) = a plastoquinol + NADP(+) + n H(+)(out). NDH-1 shuttles electrons from an unknown electron donor, via FMN and iron-sulfur (Fe-S) centers, to quinones in the respiratory and/or the photosynthetic chain. The immediate electron acceptor for the enzyme in this species is believed to be plastoquinone. Couples the redox reaction to proton translocation, and thus conserves the redox energy in a proton gradient. The sequence is that of NAD(P)H-quinone oxidoreductase subunit 1 from Rippkaea orientalis (strain PCC 8801 / RF-1) (Cyanothece sp. (strain PCC 8801)).